Reading from the N-terminus, the 1016-residue chain is UvrABC system protein A (1016 aa).

ATP is bound at residue 32–39 (GVSGSGKS). The segment at 259-286 (CPEHGSVLEELEPRSFSFNSPYGACGDC) adopts a C4-type zinc-finger fold. ABC transporter domains follow at residues 315-627 (WTKK…KNSL) and 647-975 (GNGK…EYLR). 679 to 686 (GPSGSGKS) contacts ATP. The segment at 778 to 804 (CEHCKGDGVMKIEMNFLPDIYVPCEVC) adopts a C4-type zinc-finger fold. Residues 984–1016 (EPRARGEKAEKPAKAKAPAKKRTKKQTELVEAD) form a disordered region. Over residues 985–996 (PRARGEKAEKPA) the composition is skewed to basic and acidic residues.

This sequence belongs to the ABC transporter superfamily. UvrA family. In terms of assembly, forms a heterotetramer with UvrB during the search for lesions.

Its subcellular location is the cytoplasm. The UvrABC repair system catalyzes the recognition and processing of DNA lesions. UvrA is an ATPase and a DNA-binding protein. A damage recognition complex composed of 2 UvrA and 2 UvrB subunits scans DNA for abnormalities. When the presence of a lesion has been verified by UvrB, the UvrA molecules dissociate. In Deinococcus radiodurans (strain ATCC 13939 / DSM 20539 / JCM 16871 / CCUG 27074 / LMG 4051 / NBRC 15346 / NCIMB 9279 / VKM B-1422 / R1), this protein is UvrABC system protein A.